We begin with the raw amino-acid sequence, 231 residues long: MKKTLLASSLAVGLGIVAGNAGHEAHASEADLNKASLAQMAQSNDQTLNQKPIEAGAYNYTFDYEGFTYHFESDGTHFAWNYHATGANGANMSAQAPATNNVEPSAVQANQVQSQEVEAPQNAQTQQPQASTSNNSQVTATPTESKASEGSSVNVNAHLKQIAQRESGGNIHAVNPTSGAAGKYQFLQSTWDSVAPAKYKGVSPANAPESVQDAAAVKLYNTGGAGHWVTA.

The first 27 residues, 1-27 (MKKTLLASSLAVGLGIVAGNAGHEAHA), serve as a signal peptide directing secretion. Residues 93–116 (SAQAPATNNVEPSAVQANQVQSQE) are compositionally biased toward polar residues. A disordered region spans residues 93-152 (SAQAPATNNVEPSAVQANQVQSQEVEAPQNAQTQQPQASTSNNSQVTATPTESKASEGSS). The span at 119–137 (APQNAQTQQPQASTSNNSQ) shows a compositional bias: low complexity. A compositionally biased stretch (polar residues) spans 138–152 (VTATPTESKASEGSS).

Belongs to the transglycosylase family. SceD subfamily.

The protein resides in the secreted. Is able to cleave peptidoglycan and affects clumping and separation of bacterial cells. This is Probable transglycosylase SceD (sceD) from Staphylococcus aureus (strain Mu3 / ATCC 700698).